Here is a 216-residue protein sequence, read N- to C-terminus: Probable csgAB operon transcriptional regulatory protein (216 aa).

One can recognise an HTH luxR-type domain in the interval 149-214 (NSTESALLTH…QAVSWANDNL (66 aa)). Positions 173–192 (NNEIARSLFISENTVKTHLY) form a DNA-binding region, H-T-H motif.

In terms of biological role, the master regulator for adhesive curli fimbriae expression; necessary for transcription of the csgAB operon. Plays a positive role in biofilm formation. This is Probable csgAB operon transcriptional regulatory protein from Salmonella typhimurium (strain LT2 / SGSC1412 / ATCC 700720).